The primary structure comprises 226 residues: MILFAGDPHGSYDHIYPFIKEQENVALIILGDLQLTTSDELDKLAKHCDIWFIHGNHDSKTISAFDSIWGSEWQSRNLHNRVVDIQGTRIAGLGGVFRGQIWMPPNRPMFFDPIHYCQYSPQEKIWRGGVPLRHRTSIFPSDIEILENQQADVLICHEAPKPHPMGFQVINDLAMKMGVKLVFHGHHHENFTYRTKYPYKITNVGFRSLADAEGNYLLQTIDDREK.

This is an uncharacterized protein from Haemophilus influenzae (strain ATCC 51907 / DSM 11121 / KW20 / Rd).